Reading from the N-terminus, the 254-residue chain is 3-deoxy-manno-octulosonate cytidylyltransferase (254 aa).

The protein belongs to the KdsB family.

The protein localises to the cytoplasm. The catalysed reaction is 3-deoxy-alpha-D-manno-oct-2-ulosonate + CTP = CMP-3-deoxy-beta-D-manno-octulosonate + diphosphate. It functions in the pathway nucleotide-sugar biosynthesis; CMP-3-deoxy-D-manno-octulosonate biosynthesis; CMP-3-deoxy-D-manno-octulosonate from 3-deoxy-D-manno-octulosonate and CTP: step 1/1. The protein operates within bacterial outer membrane biogenesis; lipopolysaccharide biosynthesis. Activates KDO (a required 8-carbon sugar) for incorporation into bacterial lipopolysaccharide in Gram-negative bacteria. This chain is 3-deoxy-manno-octulosonate cytidylyltransferase, found in Nitrobacter winogradskyi (strain ATCC 25391 / DSM 10237 / CIP 104748 / NCIMB 11846 / Nb-255).